A 163-amino-acid polypeptide reads, in one-letter code: Large ribosomal subunit protein uL10 (163 aa).

It belongs to the universal ribosomal protein uL10 family. In terms of assembly, part of the ribosomal stalk of the 50S ribosomal subunit. The N-terminus interacts with L11 and the large rRNA to form the base of the stalk. The C-terminus forms an elongated spine to which L12 dimers bind in a sequential fashion forming a multimeric L10(L12)X complex.

Functionally, forms part of the ribosomal stalk, playing a central role in the interaction of the ribosome with GTP-bound translation factors. This chain is Large ribosomal subunit protein uL10, found in Histophilus somni (strain 129Pt) (Haemophilus somnus).